A 364-amino-acid polypeptide reads, in one-letter code: GDP-fucose transporter 1 (364 aa).

The next 8 membrane-spanning stretches (helical) occupy residues 34 to 56 (FLLR…ISMV), 76 to 98 (VTFY…AACC), 111 to 130 (LRVA…MITF), 140 to 162 (VAFY…YLLL), 167 to 185 (SFYA…WLGV), 195 to 214 (SWLG…LNAI), 227 to 249 (IWRL…LLLL), and 264 to 286 (AHFW…VTGL).

This sequence belongs to the TPT transporter family. SLC35C subfamily.

The protein localises to the golgi apparatus membrane. The catalysed reaction is GMP(out) + GDP-beta-L-fucose(in) = GMP(in) + GDP-beta-L-fucose(out). In terms of biological role, antiporter specific for GDP-l-fucose and depending on the concomitant reverse transport of GMP. Involved in GDP-fucose import from the cytoplasm into the Golgi lumen. In Homo sapiens (Human), this protein is GDP-fucose transporter 1.